A 29-amino-acid chain; its full sequence is Galanin (29 aa).

An Alanine amide modification is found at A29.

It belongs to the galanin family.

It is found in the secreted. In terms of biological role, contracts smooth muscle of the gastrointestinal and genitourinary tract, regulates growth hormone release, modulates insulin release, and may be involved in the control of adrenal secretion. This is Galanin (GAL) from Alligator mississippiensis (American alligator).